A 1125-amino-acid chain; its full sequence is MDAFGDYVWPRATSELILLPVTGLECVGDRLLAGEGPDLLVYNLDFGGHLRMVKRVQNLLGHYLIHGFRVQPEPKGDLDSEAMIAVFGSKGLRVVKISWGQSHLRELWRSGLWNMSDWIWDARWLEGNVALALGHNSVVLYDPVIGCMLQDVPCTDRCTLSSACLIGDTWKELTIVAGAVSNELLVWYPATALPDNKPVAPDRRVSGHVGVIFSMSYLESKGLLATASEDRSVRIWKVGDLRVPGGRVQNIGHCFGHSARVWQVKLLENYLISAGEDCVCLVWSHEGEILQAFRGHQGRGIRAIAAHERQTWVITGGDDSGIRLWHLVGRGYPGLGVSSLSFKSPSRPGALKAVTLAGSWRVLAVTDVGGLYLYDLEVKCWEQLLEDNRFQSYCLLEAAPGPEGFGLCALANGEGLVKVVPINTPTAAVDQNLFQGKVHSLSWALRGYEELLLLASGPGGVVACLEISAAPTGKAIFVKERCRYLLPPSKQRWHTCSAFLPPGDFLVCGDRRGSVLLFPARPCLFKKPGVGPKAITAAEAPQAGSSSGGSESVVTGLGPVSSLHSLHGKQGVTSVTCHGGYVYSTGRDGSYYQLFVHGGRLQPVLRQKACRGMNWIAGLRMAPDGSMVVLGFHANEFVVWSPRSHEKLHIVNCGGGHRSWAFSDTEAAMAFAYLKDGDVMLYRALGGCIRPNVILREGLHGREITCVKRVGTVTLGPEFEVPNLEHPDSLEPGSEGPGLIDIVITGSEDTTVCVLALPTTTGAAHALTAVCNHISSVRALAVWGVGTPGGPQDSHPGLTAQVVSAGGRAEMHCFSLMITPDASTPSRLACHIMHLSSHRLDEYWDRQRNRHRMIKVDPETRYMSLAICELDSDRPGLGPGPLVAAACSDGAVRLFLLQDSGRILHLLAETFHHKRCVLKVHSFTHEAPNQRRRLILCSAATDGSIAFWDLTTAMDRGSTTLEPPAHPGLPYQMGTPCLTVQAHSCGVNSLHTLPTPEGHHLVASGSEDGSLHVFTLAVKMPELEEADGEAELVPQLCVLDEYSVPCAHAAHVTGIKILSPKLMVSASIDQRLTFWRLGNGEPTFMNSTVYHVPDVADMDCWPVNPEFGHRCALAGQGLEVYNWYD.

N-acetylmethionine is present on M1. 17 WD repeats span residues 89 to 130 (SKGL…GNVA), 155 to 197 (TDRC…PDNK), 207 to 246 (GHVG…VPGG), 256 to 294 (GHSA…QAFR), 295 to 335 (GHQG…YPGL), 346 to 384 (SRPG…WEQL), 433 to 475 (LFQG…TGKA), 489 to 528 (SKQR…FKKP), 567 to 605 (HGKQ…QPVL), 611 to 650 (RGMN…KLHI), 652 to 692 (NCGG…IRPN), 725 to 765 (EHPD…GAAH), 767 to 798 (LTAV…HPGL), 860 to 905 (TRYM…RILH), 912 to 958 (HHKR…DRGS), 982 to 1024 (AHSC…PELE), and 1047 to 1085 (AHAA…PTFM).

The protein belongs to the WD repeat WDR6 family. Interacts with FTSJ1; the interaction is direct, and required for 2'-O-methylation of position 34 in substrate tRNAs. Interacts with IRS4. Interacts with STK11/LKB1. Expressed in hypothalamus, hippocampus, cerebrum cortex and cerebellum.

It localises to the cytoplasm. Functionally, together with methyltransferase FTSJ1, methylates the 2'-O-ribose of nucleotides at position 34 of the tRNA anticodon loop of substrate tRNAs. Required for the correct positioning of the substrate tRNA for methylation. Required to suppress amino acid starvation-induced autophagy. Enhances the STK11/LKB1-induced cell growth suppression activity. The chain is tRNA (34-2'-O)-methyltransferase regulator WDR6 (Wdr6) from Rattus norvegicus (Rat).